Consider the following 208-residue polypeptide: MRITLVDHPLVQHKLAHLRDKRTGPKDFRELAEEVAMLMAYEAMRDLELEETTVETPIAPARVKVLSGKKLALVAILRAGLVMVEGILKLVPHARVGHIGLYRDPESLNPVQYYIKLPPDIAERRAFLLDPMLATGGSASLALSLLKERGATGVKLMAILAAPEGLERIAKDHPDTEVVVAAIDERLNDHGYIVPGLGDAGDRIYGTK.

5-phospho-alpha-D-ribose 1-diphosphate-binding positions include Arg-78, Arg-103, and 130–138 (DPMLATGGS). Uracil is bound by residues Ile-193 and 198–200 (GDA). Asp-199 contacts 5-phospho-alpha-D-ribose 1-diphosphate.

The protein belongs to the UPRTase family. Requires Mg(2+) as cofactor.

It catalyses the reaction UMP + diphosphate = 5-phospho-alpha-D-ribose 1-diphosphate + uracil. It functions in the pathway pyrimidine metabolism; UMP biosynthesis via salvage pathway; UMP from uracil: step 1/1. Allosterically activated by GTP. Its function is as follows. Catalyzes the conversion of uracil and 5-phospho-alpha-D-ribose 1-diphosphate (PRPP) to UMP and diphosphate. In Thermus thermophilus (strain ATCC 27634 / DSM 579 / HB8), this protein is Uracil phosphoribosyltransferase.